A 504-amino-acid polypeptide reads, in one-letter code: L-amino-acid oxidase (504 aa).

The signal sequence occupies residues 1–18 (MNVFFMFSLLFLAALGSC). C28 and C191 are disulfide-bonded. Residues 61–62 (MS), 81–82 (EA), R89, and 105–108 (GPMR) contribute to the FAD site. R108 provides a ligand contact to substrate. N190 carries an N-linked (GlcNAc...) asparagine glycan. H241 contributes to the substrate binding site. Residue V279 participates in FAD binding. C349 and C430 are disulfide-bonded. An N-linked (GlcNAc...) asparagine glycan is attached at N379. Y390 contacts substrate. FAD-binding positions include E475 and 482–487 (GWIDST). 482 to 483 (GW) contributes to the substrate binding site.

Belongs to the flavin monoamine oxidase family. FIG1 subfamily. In terms of assembly, homodimer; non-covalently linked. FAD is required as a cofactor. Expressed by the venom gland.

It localises to the secreted. The enzyme catalyses an L-alpha-amino acid + O2 + H2O = a 2-oxocarboxylate + H2O2 + NH4(+). The catalysed reaction is L-leucine + O2 + H2O = 4-methyl-2-oxopentanoate + H2O2 + NH4(+). Its function is as follows. Catalyzes an oxidative deamination of predominantly hydrophobic and aromatic L-amino acids, thus producing hydrogen peroxide that may contribute to the diverse toxic effects of this enzyme. Shows activity on L-Leu. Exhibits diverse biological activities, such as hemorrhage, hemolysis, edema, antibacterial and antiparasitic activities, as well as regulation of platelet aggregation. Its effect on platelets is controversial, since it either induces aggregation or inhibits agonist-induced aggregation. These different effects are probably due to different experimental conditions. This protein induces apoptosis of cultured HeLa cells. The protein is L-amino-acid oxidase of Gloydius halys (Chinese water mocassin).